Reading from the N-terminus, the 283-residue chain is Pantothenate synthetase (283 aa).

30 to 37 (MGNLHAGH) is an ATP binding site. The Proton donor role is filled by H37. Residue Q61 coordinates (R)-pantoate. Beta-alanine is bound at residue Q61. 149–152 (GEKD) is a binding site for ATP. Q155 contacts (R)-pantoate. Residues V178 and 186 to 189 (LSSR) contribute to the ATP site.

The protein belongs to the pantothenate synthetase family. As to quaternary structure, homodimer.

It is found in the cytoplasm. The catalysed reaction is (R)-pantoate + beta-alanine + ATP = (R)-pantothenate + AMP + diphosphate + H(+). It functions in the pathway cofactor biosynthesis; (R)-pantothenate biosynthesis; (R)-pantothenate from (R)-pantoate and beta-alanine: step 1/1. Catalyzes the condensation of pantoate with beta-alanine in an ATP-dependent reaction via a pantoyl-adenylate intermediate. This is Pantothenate synthetase from Azotobacter vinelandii (strain DJ / ATCC BAA-1303).